The chain runs to 1430 residues: rRNA biogenesis protein RRP5 (1430 aa).

S1 motif domains follow at residues 74–160, 176–238, 261–329, 447–511, 531–592, and 697–771; these read DMLV…LSLK, GFIF…CTCV, GSIV…LTLN, GDLV…VSNR, GNVY…LTLP, and QVGD…VSAK. Positions 1041 to 1145 are disordered; that stretch reads KITNGQKKTQ…AKEKAKAEIK (105 aa). Over residues 1043–1053 the composition is skewed to polar residues; the sequence is TNGQKKTQPLT. Basic and acidic residues-rich tracts occupy residues 1057 to 1082 and 1135 to 1145; these read VKEK…KSET and SAKEKAKAEIK. Residues 1119-1157 are a coiled coil; sequence LNVAETQKNAAKKKRLSAKEKAKAEIKEEQRLREIEERN. 6 HAT repeats span residues 1161–1193, 1195–1232, 1265–1297, 1299–1333, 1335–1367, and 1369–1404; these read KARL…FLLS, TEIE…MELV, KRKD…AYFW, GKSD…LYAK, DNND…MLIK, and GLID…LEEN.

It localises to the nucleus. It is found in the nucleolus. Involved in rRNA processing or maturation during ribosome biogenesis. The protein is rRNA biogenesis protein RRP5 of Drosophila melanogaster (Fruit fly).